The primary structure comprises 207 residues: Nucleoplasmin-2 (207 aa).

Residues 1–15 (MSRHSTSSVTETTAK) are compositionally biased toward polar residues. 2 disordered regions span residues 1-20 (MSRH…MLWG) and 121-207 (DLTW…VTKK). The span at 123-147 (TWEDDEEEEEEEEEEDEDEDADISL) shows a compositional bias: acidic residues. The tract at residues 129 to 152 (EEEEEEEEEDEDEDADISLEEIPV) is acidic tract A2. A Bipartite nuclear localization signal motif is present at residues 165–180 (SIAKKKKVEKEEDETV). The segment covering 198–207 (PRAKKPVTKK) has biased composition (basic residues).

The protein belongs to the nucleoplasmin family. As to quaternary structure, homopentamer, when bound to H2A-H2B dimers only. Homodecamer of two stacked pentamers, when bound to H2A-H2B dimers and H3-H4 tetramers simultaneously. As to expression, ovary specific.

It localises to the nucleus. In terms of biological role, core histones chaperone involved in chromatin reprogramming, specially during fertilization and early embryonic development. Probably involved in sperm DNA decondensation during fertilization. This is Nucleoplasmin-2 (Npm2) from Mus musculus (Mouse).